A 471-amino-acid polypeptide reads, in one-letter code: Abscisic acid 8'-hydroxylase 1 (471 aa).

The chain crosses the membrane as a helical span at residues 1-21; it reads MGAFLLFVCVLAPFLLVCAVR. Cys-415 contacts heme.

Belongs to the cytochrome P450 family. The cofactor is heme. In seedlings and expanding leaves.

It is found in the membrane. It carries out the reaction 2-cis-(+)-abscisate + reduced [NADPH--hemoprotein reductase] + O2 = (+)-8'-hydroxyabscisate + oxidized [NADPH--hemoprotein reductase] + H2O + H(+). It functions in the pathway plant hormone degradation; abscisic acid degradation. Functionally, involved in the oxidative degradation of abscisic acid. This Oryza sativa subsp. indica (Rice) protein is Abscisic acid 8'-hydroxylase 1 (CYP707A5).